The chain runs to 447 residues: MTIYHFVGIKGSGMSALAQILHDKGFQVQGSDVDKYFFTQKALEEKQIPIMTFSADNIQEGLTIIAGNAFPDTHEEIERALELGLSVIRYHKFLGQLIDGYTSIAITGSHGKTSTTGLLSHVVGAIRPTSYLIGDGTGSGTKDAEYFALEACEYQRHFLAYKPTYAIMTNIDWDHPDYFKSVDDVFNAFETLGKQVKKAVFALGDDAELRKLTLDIPIIYFGFGEENEFQAKNVIKETTGTKFDVYHREEFLSSFEIPAYGDHNVLNALSVIALCDYEGLPVEDVKNELKTFEGVKRRFSITEKGNQVLVDDYAHHPSEIRATVNAARQKYPDKKVVAVFQPHTFTRTRTFLQGFADSLNLADEVYLCDIFGSAREKTGNLTIADLAHKTKGNHIIKEEHTEELLKYPEAVILFMGAGDVQKFQAAYEKVLDHEFLTEADLKKSAIN.

108–114 contacts ATP; the sequence is GSHGKTS.

Belongs to the MurCDEF family.

It localises to the cytoplasm. The catalysed reaction is UDP-N-acetyl-alpha-D-muramate + L-alanine + ATP = UDP-N-acetyl-alpha-D-muramoyl-L-alanine + ADP + phosphate + H(+). The protein operates within cell wall biogenesis; peptidoglycan biosynthesis. Cell wall formation. The sequence is that of UDP-N-acetylmuramate--L-alanine ligase from Listeria monocytogenes serovar 1/2a (strain ATCC BAA-679 / EGD-e).